Reading from the N-terminus, the 137-residue chain is uncharacterized protein (137 aa).

A CENP-V/GFA domain is found at 4–118 (YEGNCLCKAI…CIDDKPDCYD (115 aa)). Zn(2+) contacts are provided by C8, C10, C27, C29, C32, C71, and C74.

It belongs to the Gfa family. Zn(2+) serves as cofactor.

The protein localises to the cytoplasm. Its subcellular location is the nucleus. This is an uncharacterized protein from Schizosaccharomyces pombe (strain 972 / ATCC 24843) (Fission yeast).